A 359-amino-acid chain; its full sequence is Fructose-bisphosphate aldolase (359 aa).

D-glyceraldehyde 3-phosphate is bound at residue serine 61. The Proton donor role is filled by aspartate 109. Zn(2+) is bound by residues histidine 110, aspartate 144, glutamate 174, and histidine 226. Glycine 227 contacts dihydroxyacetone phosphate. Histidine 265 is a Zn(2+) binding site. Dihydroxyacetone phosphate is bound by residues glycine 266–serine 268 and asparagine 287–threonine 290.

The protein belongs to the class II fructose-bisphosphate aldolase family. Zn(2+) is required as a cofactor.

The enzyme catalyses beta-D-fructose 1,6-bisphosphate = D-glyceraldehyde 3-phosphate + dihydroxyacetone phosphate. The protein operates within carbohydrate degradation; glycolysis; D-glyceraldehyde 3-phosphate and glycerone phosphate from D-glucose: step 4/4. Functionally, catalyzes the aldol condensation of dihydroxyacetone phosphate (DHAP or glycerone-phosphate) with glyceraldehyde 3-phosphate (G3P) to form fructose 1,6-bisphosphate (FBP) in gluconeogenesis and the reverse reaction in glycolysis. The chain is Fructose-bisphosphate aldolase (fba) from Borreliella burgdorferi (strain ATCC 35210 / DSM 4680 / CIP 102532 / B31) (Borrelia burgdorferi).